Reading from the N-terminus, the 480-residue chain is Protein nucleotidyltransferase YdiU (480 aa).

8 residues coordinate ATP: G86, G88, R89, K109, D121, G122, R172, and R179. D248 serves as the catalytic Proton acceptor. Mg(2+) is bound by residues N249 and D258. An ATP-binding site is contributed by D258.

Belongs to the SELO family. Mg(2+) serves as cofactor. Mn(2+) is required as a cofactor.

The enzyme catalyses L-seryl-[protein] + ATP = 3-O-(5'-adenylyl)-L-seryl-[protein] + diphosphate. It catalyses the reaction L-threonyl-[protein] + ATP = 3-O-(5'-adenylyl)-L-threonyl-[protein] + diphosphate. It carries out the reaction L-tyrosyl-[protein] + ATP = O-(5'-adenylyl)-L-tyrosyl-[protein] + diphosphate. The catalysed reaction is L-histidyl-[protein] + UTP = N(tele)-(5'-uridylyl)-L-histidyl-[protein] + diphosphate. The enzyme catalyses L-seryl-[protein] + UTP = O-(5'-uridylyl)-L-seryl-[protein] + diphosphate. It catalyses the reaction L-tyrosyl-[protein] + UTP = O-(5'-uridylyl)-L-tyrosyl-[protein] + diphosphate. Nucleotidyltransferase involved in the post-translational modification of proteins. It can catalyze the addition of adenosine monophosphate (AMP) or uridine monophosphate (UMP) to a protein, resulting in modifications known as AMPylation and UMPylation. In Salmonella typhi, this protein is Protein nucleotidyltransferase YdiU.